Here is a 318-residue protein sequence, read N- to C-terminus: Peroxisomal adenine nucleotide carrier 1 (318 aa).

Solcar repeat units follow at residues 5-94 (LESL…FKRL), 104-184 (IGTK…LKQR), and 202-296 (LSAF…ISAS). A run of 6 helical transmembrane segments spans residues 8 to 28 (LAEATSGAIGSLISTTILYPL), 104 to 124 (IGTKANLVIAAAAGACTAIAT), 158 to 178 (FDGLSISLLLTSNPAIQYTVF), 201 to 221 (SLSAFMAFLLGAISKSIATCL), 252 to 272 (VLSVLYGIWKREGILGYFKGL), and 284 to 304 (ALLLMIKEKISASTWVLILAL).

The protein belongs to the mitochondrial carrier (TC 2.A.29) family.

It localises to the peroxisome membrane. Functionally, peroxisomal adenine nucleotide transporter catalyzing the counterexchange of ATP with AMP. ATP is needed by reactions that generate acyl-CoA for peroxisomal fatty acid beta-oxidation during postgerminative growth. Required for the conversion of seed-reserved triacylglycerols into sucrose that is necessary for growth before the onset of photosynthesis. This Glycine max (Soybean) protein is Peroxisomal adenine nucleotide carrier 1 (PNC1).